Consider the following 96-residue polypeptide: Large ribosomal subunit protein uL23 (96 aa).

Belongs to the universal ribosomal protein uL23 family. Part of the 50S ribosomal subunit. Contacts protein L29, and trigger factor when it is bound to the ribosome.

In terms of biological role, one of the early assembly proteins it binds 23S rRNA. One of the proteins that surrounds the polypeptide exit tunnel on the outside of the ribosome. Forms the main docking site for trigger factor binding to the ribosome. The polypeptide is Large ribosomal subunit protein uL23 (Alkaliphilus oremlandii (strain OhILAs) (Clostridium oremlandii (strain OhILAs))).